The following is a 200-amino-acid chain: uncharacterized protein (200 aa).

The region spanning 1 to 191 (MTSANIQMAV…LDYKDYVNYK (191 aa)) is the AMMECR1 domain.

This is an uncharacterized protein from Caenorhabditis elegans.